The following is a 1191-amino-acid chain: DNA topoisomerase 2 (1191 aa).

Residues Asn64, Asn95, and 142-149 contribute to the ATP site; that span reads GTNGVGLK. Residues Glu437, Asp538, and Asp540 each contribute to the Mg(2+) site. Residues 706 to 1173 form the Topo IIA-type catalytic domain; it reads IPNFLDGMTR…PGASVWLEEI (468 aa). The active-site O-(5'-phospho-DNA)-tyrosine intermediate is the Tyr799.

It belongs to the type II topoisomerase family. Requires Mg(2+) as cofactor. Mn(2+) is required as a cofactor. The cofactor is Ca(2+).

Its subcellular location is the host cytoplasm. It carries out the reaction ATP-dependent breakage, passage and rejoining of double-stranded DNA.. In terms of biological role, type II topoisomerase. Processively relaxes supercoiled DNA. Displays DNA-supercoiling activity only when associated with the viral histone-like protein. This chain is DNA topoisomerase 2, found in Ornithodoros (relapsing fever ticks).